Consider the following 130-residue polypeptide: MAKAPTKSTRKRAKRQVADGMAHIHASFNNTIVTITDRQGNALSWATSGGSGFRGSRKSTPFAAQVAAERAGTAAQDYGLKNLEVFVKGPGPGRESAIRALNAAGYKITNITDVTPIPHNGCRPPKKRRV.

The protein belongs to the universal ribosomal protein uS11 family. Part of the 30S ribosomal subunit. Interacts with proteins S7 and S18. Binds to IF-3.

Functionally, located on the platform of the 30S subunit, it bridges several disparate RNA helices of the 16S rRNA. Forms part of the Shine-Dalgarno cleft in the 70S ribosome. This is Small ribosomal subunit protein uS11 from Pseudoalteromonas atlantica (strain T6c / ATCC BAA-1087).